Here is a 436-residue protein sequence, read N- to C-terminus: uncharacterized protein (436 aa).

The next 12 membrane-spanning stretches (helical) occupy residues 38 to 58, 70 to 90, 102 to 122, 125 to 145, 160 to 180, 197 to 217, 254 to 274, 291 to 311, 319 to 339, 342 to 362, 383 to 403, and 409 to 429; these read ILIF…TVGA, VAGI…LLIG, LAGG…AALI, VALL…NLQV, TAAS…PNLV, GPFI…LIFL, IMVG…IMTM, LVIG…GLLV, MAIA…IAPA, LSLL…GLLT, FDVL…MVVA, and ILSI…IWYF.

It belongs to the major facilitator superfamily.

The protein localises to the cell membrane. This is an uncharacterized protein from Bacillus subtilis (strain 168).